A 536-amino-acid chain; its full sequence is UDP-glucuronosyltransferase 2A2 (536 aa).

Residues 1–15 (MVSIRDFTMPKKFVQ) lie on the Cytoplasmic side of the membrane. The helical transmembrane segment at 16–36 (MLVFNLTLTEVVLSGNVLIWP) threads the bilayer. Topologically, residues 37–500 (TDGSHWLNIK…TWFQYHSLDV (464 aa)) are lumenal. Residues N58, N322, and N356 are each glycosylated (N-linked (GlcNAc...) asparagine). Residues 501–521 (IGFLLVCVTTAIFLVIQCCLF) traverse the membrane as a helical segment. Residues 522-536 (SCQKFGKIGKKKKRE) lie on the Cytoplasmic side of the membrane.

This sequence belongs to the UDP-glycosyltransferase family. In terms of tissue distribution, mainly expressed in the nasal mucosa.

It localises to the endoplasmic reticulum membrane. The enzyme catalyses glucuronate acceptor + UDP-alpha-D-glucuronate = acceptor beta-D-glucuronoside + UDP + H(+). It carries out the reaction 17alpha-estradiol + UDP-alpha-D-glucuronate = 17alpha-estradiol 3-O-(beta-D-glucuronate) + UDP + H(+). It catalyses the reaction 17beta-estradiol + UDP-alpha-D-glucuronate = 17beta-estradiol 3-O-(beta-D-glucuronate) + UDP + H(+). The catalysed reaction is chenodeoxycholate + UDP-alpha-D-glucuronate = chenodeoxycholoyl-24-O-(beta-D-glucuronate) + UDP. The enzyme catalyses lithocholate + UDP-alpha-D-glucuronate = lithocholoyl-24-O-(beta-D-glucuronate) + UDP. It carries out the reaction deoxycholate + UDP-alpha-D-glucuronate = deoxycholoyl-24-O-(beta-D-glucuronate) + UDP. It catalyses the reaction hyocholate + UDP-alpha-D-glucuronate = hyocholoyl-24-O-(beta-D-glucuronate) + UDP. The catalysed reaction is hyodeoxycholate + UDP-alpha-D-glucuronate = hyodeoxycholate 6-O-(beta-D-glucuronate) + UDP + H(+). Functionally, UDP-glucuronosyltransferase (UGT) that catalyzes phase II biotransformation reactions in which lipophilic substrates are conjugated with glucuronic acid to increase the metabolite's water solubility, thereby facilitating excretion into either the urine or bile. Essential for the elimination and detoxification of drugs, xenobiotics and endogenous compounds. Catalyzes the glucuronidation of endogenous estrogen hormone estradiol. Contributes to bile acid (BA) detoxification by catalyzing the glucuronidation of BA substrates, which are natural detergents for dietary lipids absorption. Shows a potential role in detoxification of toxic waste compounds in the amniotic fluid before birth, and air-born chemical after birth. The sequence is that of UDP-glucuronosyltransferase 2A2 from Homo sapiens (Human).